A 308-amino-acid chain; its full sequence is Ornithine carbamoyltransferase (308 aa).

Carbamoyl phosphate is bound by residues 57 to 60, glutamine 84, arginine 108, and 135 to 138; these read STRT and HPCQ. Residues asparagine 166, aspartate 224, and 228 to 229 contribute to the L-ornithine site; that span reads SM. Carbamoyl phosphate contacts are provided by residues 264–265 and arginine 292; that span reads CL.

It belongs to the aspartate/ornithine carbamoyltransferase superfamily. OTCase family.

It localises to the cytoplasm. It catalyses the reaction carbamoyl phosphate + L-ornithine = L-citrulline + phosphate + H(+). It functions in the pathway amino-acid biosynthesis; L-arginine biosynthesis; L-arginine from L-ornithine and carbamoyl phosphate: step 1/3. In terms of biological role, reversibly catalyzes the transfer of the carbamoyl group from carbamoyl phosphate (CP) to the N(epsilon) atom of ornithine (ORN) to produce L-citrulline. This chain is Ornithine carbamoyltransferase, found in Ralstonia nicotianae (strain ATCC BAA-1114 / GMI1000) (Ralstonia solanacearum).